The chain runs to 505 residues: RNA-splicing ligase RtcB homolog (505 aa).

Mn(2+) contacts are provided by Asp119, Cys122, His227, and His259. Residue 226–230 (NHYAE) coordinates GMP. A Phosphoserine modification is found at Ser300. Position 353 (His353) interacts with Mn(2+). Residues 353–354 (HN), 402–405 (GGTM), Ser409, and 428–431 (HGAG) contribute to the GMP site. Catalysis depends on His428, which acts as the GMP-histidine intermediate. Lys496 is covalently cross-linked (Glycyl lysine isopeptide (Lys-Gly) (interchain with G-Cter in SUMO2)). Residue Lys504 participates in GMP binding.

The protein belongs to the RtcB family. Catalytic component of the tRNA-splicing ligase complex. Mn(2+) is required as a cofactor.

It localises to the nucleus. It is found in the cytoplasm. The enzyme catalyses a 3'-end 3'-phospho-ribonucleotide-RNA + a 5'-end dephospho-ribonucleoside-RNA + GTP = a ribonucleotidyl-ribonucleotide-RNA + GMP + diphosphate. It carries out the reaction a 3'-end 2',3'-cyclophospho-ribonucleotide-RNA + a 5'-end dephospho-ribonucleoside-RNA + GTP + H2O = a ribonucleotidyl-ribonucleotide-RNA + GMP + diphosphate + H(+). Functionally, catalytic subunit of the tRNA-splicing ligase complex that acts by directly joining spliced tRNA halves to mature-sized tRNAs by incorporating the precursor-derived splice junction phosphate into the mature tRNA as a canonical 3',5'-phosphodiester. May act as an RNA ligase with broad substrate specificity, and may function toward other RNAs. The polypeptide is RNA-splicing ligase RtcB homolog (Sus scrofa (Pig)).